Here is a 446-residue protein sequence, read N- to C-terminus: MAHVITRINAREILDSRGNPTVEVDLETNLGIFRAAVPSGASTGIYEALELRDNDKSRYLGKGVQKAIKNINEIIAPKLIGMNCTEQKKIDNLMVEELDGSKNEWGWSKSKLGANAILAISMAVCRAGAAANKVSLYKYLAQLAGKKSDQMVLPVPCLNVINGGSHAGNKLSFQEFMIVPVGAPSFKEALRYGAEVYHTLKSEIKKKYGIDATNVGDEGGFAPNILNANEALDLLVTAIKSAGYEGKVKIAMDVAASEFYNSENKTYDLDFKTPNNDKSLVKTGAQLVDLYIDLVKKYPIVSIEDPFDQDDWENYAKLTAAIGKDVQIVGDDLLVTNPTRITKALEKNACNALPLKVNQIGSITEAIEACLLSQKNNWGVMVSHRSGETEDVFIADLVVALRTGQIKTGAPCRSERNAKYNQLLRIEESLGNNAVFAGEKFRLQLN.

Mg(2+) is bound at residue serine 42. Residue serine 42 is modified to Phosphoserine. Positions 104-108 (EWGWS) match the Pentapeptide insert motif. The residue at position 133 (lysine 133) is an N6-acetyllysine. A Glycyl lysine isopeptide (Lys-Gly) (interchain with G-Cter in ubiquitin) cross-link involves residue lysine 138. Tyrosine 139 is subject to Phosphotyrosine. Residues histidine 166 and glutamate 175 each contribute to the substrate site. Glutamate 218 acts as the Proton donor in catalysis. Aspartate 253 provides a ligand contact to Mg(2+). Positions 277-282 (DKSLVK) match the DKSLVK motif motif. Mg(2+)-binding residues include glutamate 304 and aspartate 331. Residues glutamate 304 and aspartate 331 each coordinate substrate. A Phosphothreonine modification is found at threonine 339. The Proton acceptor role is filled by lysine 356. Residue lysine 375 is modified to N6-acetyllysine. Residues 383 to 386 (SHRS) and lysine 407 each bind substrate.

Belongs to the enolase family. In terms of assembly, homodimer. Forms a complex at least composed of DegP, ENO and HSP70. Interacts with G-actin. Interacts (via the DKSLVK motif) with mammalian host PLG/plasminogen (present in the mosquito blood meal); the interaction occurs at the ookinete cell surface and is required for ookinete invasion of the mosquito midgut. Interacts with A.gambiae EBP; depending on the Plasmodium species, the interaction is either involved in ookinete invasion of the mosquito midgut (P.berghei) or is dispensable (P.falciparum). It depends on Mg(2+) as a cofactor.

The protein localises to the cytoplasm. Its subcellular location is the nucleus. The protein resides in the cytoskeleton. It is found in the cell surface. It localises to the cell membrane. The protein localises to the vacuole. The catalysed reaction is (2R)-2-phosphoglycerate = phosphoenolpyruvate + H2O. The protein operates within carbohydrate degradation; glycolysis; pyruvate from D-glyceraldehyde 3-phosphate: step 4/5. Glycolytic enzyme that catalyzes the conversion of 2-phosphoglycerate to phosphoenolpyruvate. In addition to glycolysis, involved in various processes such as parasite development and invasion. Plays an essential role during ookinete invasion of the mosquito vector midgut by mediating the interaction of the ookinete with the midgut epithelium and, further, by binding to mammalian host plasminogen in the blood meal, whose conversion to active plasmin promotes the invasion process. This Plasmodium falciparum (isolate FCR-3 / Gambia) protein is Enolase.